The primary structure comprises 1066 residues: Ribosomal protein S6 kinase delta-1 (1066 aa).

The PX domain occupies 8 to 132 (SADLARFYTV…DFFKGGIIND (125 aa)). A disordered region spans residues 207-228 (VASDSEQSKTEEERESRSLFPG). Basic and acidic residues predominate over residues 212–223 (EQSKTEEERESR). The 29-residue stretch at 277–305 (VQGESSPTRREAVKRRTAEYLMRAESISS) folds into the MIT domain. Phosphoserine occurs at positions 282, 423, 427, 449, and 455. Residues 344-445 (GVIDKVLLVM…PTLAKVHLQQ (102 aa)) form the Protein kinase 1 domain. Residues 441-509 (VHLQQPTSSP…SGSSSEEECT (69 aa)) form a disordered region. Residues 448–458 (SSPQDSSSFES) show a composition bias toward low complexity. The span at 474 to 483 (SSLTPSSQDD) shows a compositional bias: polar residues. The segment covering 492 to 503 (DSSPKWPDSGSS) has biased composition (low complexity). Residues Ser494, Ser528, Ser583, Ser605, Ser608, Ser640, Ser661, Ser664, Ser667, and Ser794 each carry the phosphoserine modification. Residues 553-596 (HLAADSDSPSTQLRAHELKFFPNDDPEAVSSPRTSDSLSRSKNS) form a disordered region. Low complexity predominate over residues 582-593 (SSPRTSDSLSRS). One can recognise a Protein kinase 2 domain in the interval 794 to 1056 (SSDPKFQGLG…VEDIKSHPFF (263 aa)). Residues 801-809 (GLGVVESAV) and Arg820 each bind ATP. Ser872 carries the phosphoserine modification. The Proton acceptor role is filled by Asp929.

This sequence belongs to the protein kinase superfamily. Ser/Thr protein kinase family. S6 kinase subfamily. In terms of assembly, interacts with SPHK1 and phosphatidylinositol 3-phosphate. Interacts (via PX domain) with PRDX3. As to expression, highly expressed in testis, skeletal muscle, brain, heart, placenta, kidney and liver and weakly expressed in thymus, small intestine, lung and colon.

It is found in the cytoplasm. The protein resides in the membrane. It localises to the early endosome. The enzyme catalyses L-seryl-[protein] + ATP = O-phospho-L-seryl-[protein] + ADP + H(+). It carries out the reaction L-threonyl-[protein] + ATP = O-phospho-L-threonyl-[protein] + ADP + H(+). In terms of biological role, may be involved in transmitting sphingosine-1 phosphate (SPP)-mediated signaling into the cell. Plays a role in the recruitment of PRDX3 to early endosomes. This Homo sapiens (Human) protein is Ribosomal protein S6 kinase delta-1 (RPS6KC1).